Consider the following 199-residue polypeptide: NAD(P)H dehydrogenase (quinone) (199 aa).

The region spanning 4–190 (VLVLYYSAYG…AGARYQGRMI (187 aa)) is the Flavodoxin-like domain. Residues 10 to 15 (SAYGHI) and 78 to 80 (TRF) contribute to the FMN site. Tyrosine 12 contacts NAD(+). A substrate-binding site is contributed by tryptophan 98. Residues 113–119 (SSATQHG) and histidine 134 contribute to the FMN site.

Belongs to the WrbA family. FMN is required as a cofactor.

It catalyses the reaction a quinone + NADH + H(+) = a quinol + NAD(+). The enzyme catalyses a quinone + NADPH + H(+) = a quinol + NADP(+). The polypeptide is NAD(P)H dehydrogenase (quinone) (Nitrobacter winogradskyi (strain ATCC 25391 / DSM 10237 / CIP 104748 / NCIMB 11846 / Nb-255)).